Reading from the N-terminus, the 428-residue chain is Adenylosuccinate synthetase (428 aa).

GTP contacts are provided by residues 12-18 (GDEGKGK) and 40-42 (GHT). D13 (proton acceptor) is an active-site residue. Residues D13 and G40 each contribute to the Mg(2+) site. IMP is bound by residues 13–16 (DEGK), 38–41 (NAGH), T128, R142, Q223, T238, and R302. H41 acts as the Proton donor in catalysis. Residue 298–304 (VTTGRPR) participates in substrate binding. Residues R304, 330–332 (KLD), and 412–414 (GTG) contribute to the GTP site.

This sequence belongs to the adenylosuccinate synthetase family. Homodimer. Mg(2+) is required as a cofactor.

It localises to the cytoplasm. It catalyses the reaction IMP + L-aspartate + GTP = N(6)-(1,2-dicarboxyethyl)-AMP + GDP + phosphate + 2 H(+). Its pathway is purine metabolism; AMP biosynthesis via de novo pathway; AMP from IMP: step 1/2. Plays an important role in the de novo pathway of purine nucleotide biosynthesis. Catalyzes the first committed step in the biosynthesis of AMP from IMP. The polypeptide is Adenylosuccinate synthetase (Bifidobacterium adolescentis (strain ATCC 15703 / DSM 20083 / NCTC 11814 / E194a)).